A 483-amino-acid chain; its full sequence is MLTLDTLNTMLAVSEEGMVEEMILALLASPQLVIFFEKFPRLKNAVTADLPRWREALRSRLKDARVPPELTEEVMCYQQSQLLSTPQFIVQLPQILALLHRLHSPYTAQAKQLTESNSTFTPALHTLFLQRWRLSLVVQATTLNQQLLEEEREQLLSDVQERMTLSGQLEPTLAENDNAAGRLWDMSAGQLKRGDYQLIVKYGEFLAAQPELMQLAEQLGRSREAKSVPKKDAPMETFRTLVREPATVPEQVDGIQQGDDILRLLPPELATLGITELEYEFYRRLVEKQLLTYRLHGEAWREKVTERPVVHQDVDEQPRGPFIVCVDTSGSMGGFNEQCAKAFCLALMRVALADNRRCFIMLFSTDVVRYELSGPEGIEQAIRFLSQRFRGGTDIASCFRAIIERMQGREWFDADAVVISDFIAQRLPDDVVSKVGELQRLHQHRFHAVAMSAHGKPGIMRIFDHIWRFDTGMRSRLLRRWRR.

Belongs to the ViaA family. As to quaternary structure, homodimer. Interacts with RavA.

Its subcellular location is the cytoplasm. Functionally, component of the RavA-ViaA chaperone complex, which may act on the membrane to optimize the function of some of the respiratory chains. ViaA stimulates the ATPase activity of RavA. This is Regulatory protein ViaA from Salmonella agona (strain SL483).